A 109-amino-acid chain; its full sequence is Aquaporin-2 (109 aa).

At 1-6 (SIAFSK) the chain is on the cytoplasmic side. A helical membrane pass occupies residues 7 to 27 (AVFSEFLATLLFVFFGLGSAL). The Extracellular portion of the chain corresponds to 28–35 (NWPQALPS). A helical transmembrane segment spans residues 36-54 (GLQIAMAFGLAIGTLVQTL). Residues 55–59 (GHISG) are Cytoplasmic-facing. The discontinuously helical intramembrane region spans 60–69 (AHINPAVTVA). The short motif at 63 to 65 (NPA) is the NPA 1 element. The Cytoplasmic portion of the chain corresponds to 70–80 (CLVGCHVSFLR). A helical membrane pass occupies residues 81-102 (AIFYVAAQLLGAVAGAALLHEL). The Extracellular segment spans residues 103–109 (TPPDIRG).

This sequence belongs to the MIP/aquaporin (TC 1.A.8) family. As to quaternary structure, homotetramer. In terms of processing, serine phosphorylation is necessary and sufficient for expression at the apical membrane. Endocytosis is not phosphorylation-dependent. N-glycosylated.

It localises to the apical cell membrane. It is found in the basolateral cell membrane. The protein resides in the cell membrane. Its subcellular location is the cytoplasmic vesicle membrane. The protein localises to the golgi apparatus. It localises to the trans-Golgi network membrane. The enzyme catalyses H2O(in) = H2O(out). It catalyses the reaction glycerol(in) = glycerol(out). Functionally, forms a water-specific channel that provides the plasma membranes of renal collecting duct with high permeability to water, thereby permitting water to move in the direction of an osmotic gradient. Plays an essential role in renal water homeostasis. Could also be permeable to glycerol. In Orycteropus afer (Aardvark), this protein is Aquaporin-2.